The primary structure comprises 45 residues: Large ribosomal subunit protein bL34 (45 aa).

The interval 26 to 45 is disordered; it reads RAGRSILSARRSKGRSQLSA.

This sequence belongs to the bacterial ribosomal protein bL34 family.

The polypeptide is Large ribosomal subunit protein bL34 (Parafrankia sp. (strain EAN1pec)).